Here is a 212-residue protein sequence, read N- to C-terminus: Probable U3 small nucleolar RNA-associated protein 11 (212 aa).

The protein belongs to the UTP11 family. Component of the ribosomal small subunit (SSU) processome.

It localises to the nucleus. The protein resides in the nucleolus. Functionally, involved in nucleolar processing of pre-18S ribosomal RNA. This chain is Probable U3 small nucleolar RNA-associated protein 11, found in Plasmodium falciparum (isolate 3D7).